We begin with the raw amino-acid sequence, 67 residues long: uncharacterized protein (67 aa).

This is an uncharacterized protein from Enterobacteria phage T4 (Bacteriophage T4).